Consider the following 138-residue polypeptide: Phosphoribosyl-AMP cyclohydrolase (138 aa).

Position 84 (Asp-84) interacts with Mg(2+). Cys-85 is a binding site for Zn(2+). 2 residues coordinate Mg(2+): Asp-86 and Asp-88. Residues Cys-102 and Cys-109 each contribute to the Zn(2+) site.

Belongs to the PRA-CH family. In terms of assembly, homodimer. Mg(2+) serves as cofactor. Requires Zn(2+) as cofactor.

It localises to the cytoplasm. It catalyses the reaction 1-(5-phospho-beta-D-ribosyl)-5'-AMP + H2O = 1-(5-phospho-beta-D-ribosyl)-5-[(5-phospho-beta-D-ribosylamino)methylideneamino]imidazole-4-carboxamide. It functions in the pathway amino-acid biosynthesis; L-histidine biosynthesis; L-histidine from 5-phospho-alpha-D-ribose 1-diphosphate: step 3/9. Catalyzes the hydrolysis of the adenine ring of phosphoribosyl-AMP. The sequence is that of Phosphoribosyl-AMP cyclohydrolase from Burkholderia ambifaria (strain ATCC BAA-244 / DSM 16087 / CCUG 44356 / LMG 19182 / AMMD) (Burkholderia cepacia (strain AMMD)).